A 562-amino-acid chain; its full sequence is Nucleoprotein (562 aa).

Positions 53–238 are binding site for the cap structure m7GTP; it reads MRRDKRDESD…ITQEESQINI (186 aa). Mn(2+) contacts are provided by Asp-381 and Glu-383. The Zn(2+) site is built by Glu-391, Cys-498, His-501, and Cys-522. Asp-526 provides a ligand contact to Mn(2+).

Belongs to the arenaviridae nucleocapsid protein family. In terms of assembly, homomultimerizes to form the nucleocapsid. Binds to viral genomic RNA. Interacts with glycoprotein G2. Interacts with protein Z; this interaction probably directs the encapsidated genome to budding sites. Interacts with protein L; this interaction does not interfere with Z-L interaction. Interacts with host IKBKE (via Protein kinase domain); the interaction inhibits IKBKE kinase activity.

The protein localises to the virion. The protein resides in the host cytoplasm. Functionally, encapsidates the genome, protecting it from nucleases. The encapsidated genomic RNA is termed the nucleocapsid (NC). Serves as template for viral transcription and replication. The increased presence of protein N in host cell does not seem to trigger the switch from transcription to replication as observed in other negative strain RNA viruses. Through the interaction with host IKBKE, strongly inhibits the phosphorylation and nuclear translocation of host IRF3, a protein involved in interferon activation pathway, leading to the inhibition of interferon-beta and IRF3-dependent promoters activation. Also encodes a functional 3'-5' exoribonuclease that degrades preferentially dsRNA substrates and thereby participates in the suppression of interferon induction. The chain is Nucleoprotein from Bear Canyon mammarenavirus (isolate Mouse/United States/AV A0070039/2000) (BCNV).